Reading from the N-terminus, the 272-residue chain is Dermonecrotic toxin LvSicTox-alphaIC1biii (272 aa).

H5 is a catalytic residue. Positions 25 and 27 each coordinate Mg(2+). Catalysis depends on H41, which acts as the Nucleophile. 2 disulfides stabilise this stretch: C45-C51 and C47-C189. Position 84 (D84) interacts with Mg(2+).

It belongs to the arthropod phospholipase D family. Class II subfamily. The cofactor is Mg(2+). As to expression, expressed by the venom gland.

The protein resides in the secreted. The catalysed reaction is an N-(acyl)-sphingosylphosphocholine = an N-(acyl)-sphingosyl-1,3-cyclic phosphate + choline. It catalyses the reaction an N-(acyl)-sphingosylphosphoethanolamine = an N-(acyl)-sphingosyl-1,3-cyclic phosphate + ethanolamine. It carries out the reaction a 1-acyl-sn-glycero-3-phosphocholine = a 1-acyl-sn-glycero-2,3-cyclic phosphate + choline. The enzyme catalyses a 1-acyl-sn-glycero-3-phosphoethanolamine = a 1-acyl-sn-glycero-2,3-cyclic phosphate + ethanolamine. Functionally, dermonecrotic toxins cleave the phosphodiester linkage between the phosphate and headgroup of certain phospholipids (sphingolipid and lysolipid substrates), forming an alcohol (often choline) and a cyclic phosphate. This toxin acts on sphingomyelin (SM). It may also act on ceramide phosphoethanolamine (CPE), lysophosphatidylcholine (LPC) and lysophosphatidylethanolamine (LPE), but not on lysophosphatidylserine (LPS), and lysophosphatidylglycerol (LPG). It acts by transphosphatidylation, releasing exclusively cyclic phosphate products as second products. Induces dermonecrosis, hemolysis, increased vascular permeability, edema, inflammatory response, and platelet aggregation. This Loxosceles variegata (Recluse spider) protein is Dermonecrotic toxin LvSicTox-alphaIC1biii.